The following is a 466-amino-acid chain: ATP synthase subunit beta (466 aa).

156-163 lines the ATP pocket; it reads GGAGVGKT.

This sequence belongs to the ATPase alpha/beta chains family. As to quaternary structure, F-type ATPases have 2 components, CF(1) - the catalytic core - and CF(0) - the membrane proton channel. CF(1) has five subunits: alpha(3), beta(3), gamma(1), delta(1), epsilon(1). CF(0) has three main subunits: a(1), b(2) and c(9-12). The alpha and beta chains form an alternating ring which encloses part of the gamma chain. CF(1) is attached to CF(0) by a central stalk formed by the gamma and epsilon chains, while a peripheral stalk is formed by the delta and b chains.

It is found in the cell membrane. The enzyme catalyses ATP + H2O + 4 H(+)(in) = ADP + phosphate + 5 H(+)(out). Produces ATP from ADP in the presence of a proton gradient across the membrane. The catalytic sites are hosted primarily by the beta subunits. The polypeptide is ATP synthase subunit beta (Polynucleobacter asymbioticus (strain DSM 18221 / CIP 109841 / QLW-P1DMWA-1) (Polynucleobacter necessarius subsp. asymbioticus)).